The chain runs to 406 residues: MLDRKLMESLGGWQGYGVERVEWPEDPGRTLSIYLKPTAKVMLCEQCGARCRQVHETTVRRVRDLPIFEYRVVLHVPRRRLWCEQCGGPRLERLAWLGRYQRVTDRLAQACSQLLQSSNVQAVARFFELGWHTVKTLDKARLRASVREPDWSKIEYLAMDEFALHKGHRYATVVVDPIGRQVLWIGPGRSRETARAFFEQLPPGAAQRIKAVAIDMTTAYELEIQAHSPQAEIVYDLFHVVAKYGREVIDRVRVDQANQLRQDRPARRIIKSSRWLLLRNRDNLDRQQAVRLDELLQANQPLLTVYVLRDELKRLWFYQRPAWARQAWNHWYEQAEQSGIAALNTFAQRLKGYLHGILARCRHPLNTSIVEGINNTIKVIKRRAYGYRDQEYFFLKIRAAFPGNAR.

It belongs to the transposase 12 family.

Its function is as follows. Involved in the transposition of the insertion sequence. The protein is Transposase for insertion sequence element IS1001 (tnpA) of Bordetella parapertussis.